Reading from the N-terminus, the 198-residue chain is COMM domain-containing protein 9 (198 aa).

A2 is subject to N-acetylalanine. Residues 122 to 196 (RLVDLDWRVD…RIRDQLSAVA (75 aa)) form the COMM domain.

It belongs to the COMM domain-containing protein 9 family. In terms of assembly, component of the commander complex consisting of the CCC subcomplex and the retriever subcomplex. Component of the CCC (COMMD/CCDC22/CCDC93) subcomplex consisting of COMMD1, COMMD2, COMMD3, COMMD4, COMMD5, COMMD6, COMMD7, COMMD8, COMMD9, COMMD10, CCDC22 and CCDC93; within the complex forms a heterodimer with COMMD7. Interacts with RELB and NFKB1/p105. Interacts with CCDC22, CCDC93, SCNN1B, CUL1. Ubiquitous.

Its subcellular location is the nucleus. The protein localises to the cytoplasmic vesicle. Scaffold protein in the commander complex that is essential for endosomal recycling of transmembrane cargos; the commander complex is composed of the CCC subcomplex and the retriever subcomplex. May modulate activity of cullin-RING E3 ubiquitin ligase (CRL) complexes. May down-regulate activation of NF-kappa-B. Modulates Na(+) transport in epithelial cells by regulation of apical cell surface expression of amiloride-sensitive sodium channel (ENaC) subunits. This Homo sapiens (Human) protein is COMM domain-containing protein 9 (COMMD9).